A 1578-amino-acid chain; its full sequence is FERM and PDZ domain-containing protein 1 (1578 aa).

The PDZ domain occupies 57–135 (TVKIDKDTLL…SLSITVVRCT (79 aa)). Residues 181 to 496 (NVLKLYLENG…GYYRLLVDPV (316 aa)) form the FERM domain. 3 disordered regions span residues 555-616 (KEEQ…EEDD), 720-743 (SDSS…QGWT), and 759-831 (PLAF…VKKY). Residues 720-729 (SDSSESTASR) show a composition bias toward polar residues. Over residues 730-742 (QGGAPPAWGQQGW) the composition is skewed to low complexity. Residues 793–811 (AEPSATSLQNKASTSSPEN) show a composition bias toward polar residues. Residues 822–831 (PSRRGGVKKY) are compositionally biased toward basic residues. Residues 924 to 931 (EPETMETK) are important for interaction with GPSM2. 3 disordered regions span residues 950 to 1030 (PNNK…LASN), 1070 to 1194 (KYTE…QGCQ), and 1347 to 1374 (PQPE…SAGS). The span at 968-986 (TPHCSNPGSSGPDTAQARP) shows a compositional bias: polar residues. Residues 1100–1117 (TKEEPQGQLSLERDREVT) are compositionally biased toward basic and acidic residues. Residues 1139–1150 (DVSNNVSQTLDI) show a composition bias toward polar residues.

In terms of assembly, interacts with GPSM1. Interacts with GPSM2 (via TPR repeat region).

It is found in the cytoplasm. The protein resides in the cytosol. The protein localises to the cell membrane. Its function is as follows. Stabilizes membrane-bound GPSM1, and thereby promotes its interaction with GNAI1. In Homo sapiens (Human), this protein is FERM and PDZ domain-containing protein 1 (FRMPD1).